The primary structure comprises 389 residues: Chorismate synthase (389 aa).

NADP(+)-binding residues include Arg41 and Arg47. FMN-binding positions include 129–131 (RSS), 247–248 (NA), Gly291, 306–310 (KPIST), and Arg332.

It belongs to the chorismate synthase family. As to quaternary structure, homotetramer. FMNH2 serves as cofactor.

It carries out the reaction 5-O-(1-carboxyvinyl)-3-phosphoshikimate = chorismate + phosphate. Its pathway is metabolic intermediate biosynthesis; chorismate biosynthesis; chorismate from D-erythrose 4-phosphate and phosphoenolpyruvate: step 7/7. Its function is as follows. Catalyzes the anti-1,4-elimination of the C-3 phosphate and the C-6 proR hydrogen from 5-enolpyruvylshikimate-3-phosphate (EPSP) to yield chorismate, which is the branch point compound that serves as the starting substrate for the three terminal pathways of aromatic amino acid biosynthesis. This reaction introduces a second double bond into the aromatic ring system. This chain is Chorismate synthase, found in Rubrobacter xylanophilus (strain DSM 9941 / JCM 11954 / NBRC 16129 / PRD-1).